A 244-amino-acid chain; its full sequence is tRNA pseudouridine synthase A (244 aa).

Asp-52 serves as the catalytic Nucleophile. Tyr-110 serves as a coordination point for substrate.

The protein belongs to the tRNA pseudouridine synthase TruA family. In terms of assembly, homodimer.

The enzyme catalyses uridine(38/39/40) in tRNA = pseudouridine(38/39/40) in tRNA. In terms of biological role, formation of pseudouridine at positions 38, 39 and 40 in the anticodon stem and loop of transfer RNAs. This is tRNA pseudouridine synthase A from Caldicellulosiruptor bescii (strain ATCC BAA-1888 / DSM 6725 / KCTC 15123 / Z-1320) (Anaerocellum thermophilum).